The following is a 59-amino-acid chain: Large ribosomal subunit protein bL32 (59 aa).

Belongs to the bacterial ribosomal protein bL32 family.

This chain is Large ribosomal subunit protein bL32, found in Rhizorhabdus wittichii (strain DSM 6014 / CCUG 31198 / JCM 15750 / NBRC 105917 / EY 4224 / RW1) (Sphingomonas wittichii).